A 235-amino-acid polypeptide reads, in one-letter code: Attacin-E (235 aa).

Positions methionine 1–serine 19 are cleaved as a signal peptide. A propeptide spanning residues arginine 20–arginine 47 is cleaved from the precursor.

It belongs to the attacin/sarcotoxin-2 family. In terms of processing, attacin F appears to be derived by proteolytic digestion of attacin E.

The protein localises to the secreted. Functionally, hemolymph antibacterial protein. This is Attacin-E from Hyalophora cecropia (Cecropia moth).